A 403-amino-acid polypeptide reads, in one-letter code: Phosphopentomutase (403 aa).

Mn(2+) is bound by residues Asp13, Asp298, His303, Asp339, His340, and His351.

Belongs to the phosphopentomutase family. Mn(2+) is required as a cofactor.

The protein resides in the cytoplasm. It catalyses the reaction 2-deoxy-alpha-D-ribose 1-phosphate = 2-deoxy-D-ribose 5-phosphate. The enzyme catalyses alpha-D-ribose 1-phosphate = D-ribose 5-phosphate. It participates in carbohydrate degradation; 2-deoxy-D-ribose 1-phosphate degradation; D-glyceraldehyde 3-phosphate and acetaldehyde from 2-deoxy-alpha-D-ribose 1-phosphate: step 1/2. Isomerase that catalyzes the conversion of deoxy-ribose 1-phosphate (dRib-1-P) and ribose 1-phosphate (Rib-1-P) to deoxy-ribose 5-phosphate (dRib-5-P) and ribose 5-phosphate (Rib-5-P), respectively. The chain is Phosphopentomutase from Streptococcus pneumoniae serotype 4 (strain ATCC BAA-334 / TIGR4).